We begin with the raw amino-acid sequence, 556 residues long: 2-succinyl-5-enolpyruvyl-6-hydroxy-3-cyclohexene-1-carboxylate synthase (556 aa).

The protein belongs to the TPP enzyme family. MenD subfamily. In terms of assembly, homodimer. Mg(2+) is required as a cofactor. Mn(2+) serves as cofactor. It depends on thiamine diphosphate as a cofactor.

The catalysed reaction is isochorismate + 2-oxoglutarate + H(+) = 5-enolpyruvoyl-6-hydroxy-2-succinyl-cyclohex-3-ene-1-carboxylate + CO2. It functions in the pathway quinol/quinone metabolism; 1,4-dihydroxy-2-naphthoate biosynthesis; 1,4-dihydroxy-2-naphthoate from chorismate: step 2/7. The protein operates within quinol/quinone metabolism; menaquinone biosynthesis. Its function is as follows. Catalyzes the thiamine diphosphate-dependent decarboxylation of 2-oxoglutarate and the subsequent addition of the resulting succinic semialdehyde-thiamine pyrophosphate anion to isochorismate to yield 2-succinyl-5-enolpyruvyl-6-hydroxy-3-cyclohexene-1-carboxylate (SEPHCHC). This is 2-succinyl-5-enolpyruvyl-6-hydroxy-3-cyclohexene-1-carboxylate synthase from Klebsiella pneumoniae (strain 342).